The primary structure comprises 658 residues: Translation factor GUF1, mitochondrial (658 aa).

Residues 1–40 (MRGCLQTVRWLTSAWQRPPSYPPLSRAAPCRFFNVSIPRN) constitute a mitochondrion transit peptide. A tr-type G domain is found at 60-240 (DRFRNFCIVA…TVVEQIPAPV (181 aa)). GTP is bound by residues 69–76 (AHVDHGKS), 133–137 (DTPGH), and 187–190 (NKVD).

This sequence belongs to the TRAFAC class translation factor GTPase superfamily. Classic translation factor GTPase family. LepA subfamily.

The protein localises to the mitochondrion inner membrane. It catalyses the reaction GTP + H2O = GDP + phosphate + H(+). Promotes mitochondrial protein synthesis. May act as a fidelity factor of the translation reaction, by catalyzing a one-codon backward translocation of tRNAs on improperly translocated ribosomes. Binds to mitochondrial ribosomes in a GTP-dependent manner. This is Translation factor GUF1, mitochondrial from Paracoccidioides brasiliensis (strain Pb03).